The following is an 88-amino-acid chain: Mitochondrial import inner membrane translocase subunit Tim10 (88 aa).

The Twin CX3C motif motif lies at 25–49; it reads CSAKCISKYNEGDLNVGESVCAERC. Intrachain disulfides connect Cys25–Cys49 and Cys29–Cys45. The segment at 63–88 is disordered; the sequence is KMSGTQPGQEVPQEAPAAAPEKKGWF. Residues 68–81 are compositionally biased toward low complexity; that stretch reads QPGQEVPQEAPAAA.

It belongs to the small Tim family. In terms of assembly, heterohexamer; composed of 3 copies of timm9 and 3 copies of timm10, named soluble 70 kDa complex. Associates directly with the TIM22 complex, whose core is composed of timm22. Interacts with the transmembrane regions of multi-pass transmembrane proteins in transit.

The protein resides in the mitochondrion inner membrane. Its function is as follows. Component of the TIM22 complex, a complex that mediates the import and insertion of multi-pass transmembrane proteins into the mitochondrial inner membrane. The TIM22 complex forms a twin-pore translocase that uses the membrane potential as external driving force. The protein is Mitochondrial import inner membrane translocase subunit Tim10 (timm10) of Dictyostelium discoideum (Social amoeba).